Consider the following 520-residue polypeptide: Protein FAM124A (520 aa).

2 disordered regions span residues M1–V34 and F311–D334. Residues S20–L32 show a composition bias toward low complexity.

The protein belongs to the FAM124 family.

The polypeptide is Protein FAM124A (fam124a) (Xenopus laevis (African clawed frog)).